Here is a 487-residue protein sequence, read N- to C-terminus: Bifunctional cytokinin biosynthesis protein (487 aa).

Residues 1–266 (MESTNRFMIG…RMASDFCYAS (266 aa)) are adenylate isopentenyltransferase. Residues 267 to 487 (TSISFHPINE…FSRKGELEWV (221 aa)) form a cytokinin riboside 5'-monophosphate phosphoribohydrolase region. Substrate contacts are provided by residues E352, 380 to 381 (RK), 403 to 409 (GYGTLEE), and T415.

In the N-terminal section; belongs to the IPP transferase family. It in the C-terminal section; belongs to the LOG family.

The enzyme catalyses dimethylallyl diphosphate + AMP = N(6)-(dimethylallyl)adenosine 5'-phosphate + diphosphate. It catalyses the reaction N(6)-(dimethylallyl)adenosine 5'-phosphate + H2O = N(6)-dimethylallyladenine + D-ribose 5-phosphate. The catalysed reaction is 9-ribosyl-trans-zeatin 5'-phosphate + H2O = trans-zeatin + D-ribose 5-phosphate. Its pathway is secondary metabolite biosynthesis. In terms of biological role, bifunctional cytokinin synthesis protein; part of the gene cluster that mediates the biosynthesis of cytokinins such as fusatin, fusatinic acids or 8-oxofusatin, known for their growth promoting and anti-senescence activities toward host plants. FCK1 is a bifunctional enzyme that performs the first steps in the biosynthesis of Fusarium cytokinins. It first condenses adenosine monophosphate (AMP) with dimethylallyl diphosphate (DMAPP) to yield isoprenyl adenosine monophosphate. It then catalyzes the removal of the phosphoribose to produce isopentenylaldehyde. The cytochrome P450 monooxygenase then converts isopentenylaldehyde to trans-zeatin. A condensation step converts trans-zeatin to fusatin which is further modified to produce fusatinic acid. The mechanism for oxidation of fusatin to fusatinic acid remains unknown. 8-oxofusatin could be produced through several pathways, via direct oxygenation of fusatin, or via the 8-oxo-pentenyladenine intermediate which itself must arise from either the prenylation of 8-oxo-AMP by FCK1 and/or oxygenation of isopentenylaldehyde. Both the FCK3 and FCK4 enzymes act downstream of the identified cytokinins to produce yet unidentified compounds. This Fusarium pseudograminearum (strain CS3096) (Wheat and barley crown-rot fungus) protein is Bifunctional cytokinin biosynthesis protein.